The chain runs to 752 residues: Lid2 complex component jmj3 (752 aa).

The JmjN domain occupies Ile34–Pro75. The JmjC domain maps to Tyr162–Leu333. 2 stretches are compositionally biased toward polar residues: residues Ser391–Ser402 and Leu409–Ser423. The interval Ser391–Glu438 is disordered. The segment covering Thr427 to Glu438 has biased composition (basic and acidic residues).

Component of the Lid2 complex composed of ash2, jmj3, lid2, sdc1 and snt2.

The protein localises to the nucleus. This chain is Lid2 complex component jmj3, found in Schizosaccharomyces pombe (strain 972 / ATCC 24843) (Fission yeast).